The primary structure comprises 563 residues: Pyruvate decarboxylase isozyme 1 (563 aa).

Ser-2 is subject to N-acetylserine. Pyruvate-binding residues include Asp-28, His-115, and Tyr-157. Arg-161 carries the post-translational modification Omega-N-methylarginine. Lys-212 is covalently cross-linked (Glycyl lysine isopeptide (Lys-Gly) (interchain with G-Cter in ubiquitin)). Ser-223 is subject to Phosphoserine. Arg-224 lines the pyruvate pocket. Residue Lys-233 forms a Glycyl lysine isopeptide (Lys-Gly) (interchain with G-Cter in ubiquitin) linkage. A Phosphothreonine modification is found at Thr-266. Residues Lys-269 and Lys-332 each participate in a glycyl lysine isopeptide (Lys-Gly) (interchain with G-Cter in ubiquitin) cross-link. Thr-336 and Thr-353 each carry phosphothreonine. Thiamine diphosphate is bound by residues Thr-390 and 413 to 415 (GSI). A Mg(2+)-binding site is contributed by Asp-444. Residues 445–446 (GS) and 471–476 (NDGYTI) contribute to the thiamine diphosphate site. Mg(2+)-binding residues include Asn-471 and Gly-473. Residue Glu-477 coordinates pyruvate. Glycyl lysine isopeptide (Lys-Gly) (interchain with G-Cter in ubiquitin) cross-links involve residues Lys-484, Lys-505, and Lys-520. Thr-522 bears the Phosphothreonine mark. Position 526 is a phosphoserine (Ser-526).

It belongs to the TPP enzyme family. As to quaternary structure, homotetramer. The cofactor is Mg(2+). Requires thiamine diphosphate as cofactor. In terms of processing, cleavage of N-terminal methionine and N-terminal acetylation by NAT1/ARD1.

It localises to the cytoplasm. It is found in the nucleus. The catalysed reaction is pyruvate + H(+) = acetaldehyde + CO2. It catalyses the reaction 3-methyl-2-oxobutanoate + H(+) = 2-methylpropanal + CO2. The enzyme catalyses (S)-3-methyl-2-oxopentanoate + H(+) = 2-methylbutanal + CO2. It carries out the reaction indole-3-pyruvate + H(+) = indole-3-acetaldehyde + CO2. The catalysed reaction is 3-phenylpyruvate + H(+) = 2-phenylacetaldehyde + CO2. It catalyses the reaction 2-oxobutanoate + H(+) = propanal + CO2. The enzyme catalyses 2-oxopentanoate + H(+) = butanal + CO2. It carries out the reaction 2 acetaldehyde = acetoin. The catalysed reaction is acetaldehyde + pyruvate + H(+) = acetoin + CO2. It participates in fermentation; ethanol fermentation. The protein operates within amino-acid degradation; Ehrlich pathway. With respect to regulation, allosterically activated by its substrate, pyruvate. In terms of biological role, major of three pyruvate decarboxylases (PDC1, PDC5, PDC6) implicated in the nonoxidative conversion of pyruvate to acetaldehyde and carbon dioxide during alcoholic fermentation. Most of the produced acetaldehyde is subsequently reduced to ethanol, but some is required for cytosolic acetyl-CoA production for biosynthetic pathways. The enzyme is also one of five 2-oxo acid decarboxylases (PDC1, PDC5, PDC6, ARO10, and THI3) able to decarboxylate more complex 2-oxo acids (alpha-ketoacids) than pyruvate, which seem mainly involved in amino acid catabolism. Here the enzyme catalyzes the decarboxylation of amino acids, which, in a first step, have been transaminated to the corresponding 2-oxo acids. In a third step, the resulting aldehydes are reduced to alcohols, collectively referred to as fusel oils or alcohols. Its preferred substrates are the transaminated amino acids derived from threonine (2-oxobutanoate), norvaline (2-oxopentanoate), valine (3-methyl-2-oxobutanoate, also alpha-keto-isovalerate), isoleucine ((3S)-3-methyl-2-oxopentanoate, also alpha-keto-beta-methylvalerate), phenylalanine (phenylpyruvate), and tryptophan (3-(indol-3-yl)pyruvate), whereas transaminated leucine is no substrate. In a side-reaction the carbanionic intermediate (or active aldehyde) generated by decarboxylation or by activation of an aldehyde can react with an aldehyde via condensation (or carboligation) yielding a 2-hydroxy ketone, collectively called acyloins. The polypeptide is Pyruvate decarboxylase isozyme 1 (Saccharomyces cerevisiae (strain ATCC 204508 / S288c) (Baker's yeast)).